The primary structure comprises 389 residues: Type II methyltransferase M2.BsuMI (389 aa).

One can recognise an SAM-dependent MTase C5-type domain in the interval 1–299; sequence MKVVSLFSGI…ENLSQPKGSI (299 aa). Residue cysteine 69 is part of the active site.

Belongs to the class I-like SAM-binding methyltransferase superfamily. C5-methyltransferase family. Monomer. May form a complex with YdiP, also seems to be active alone.

It catalyses the reaction a 2'-deoxycytidine in DNA + S-adenosyl-L-methionine = a 5-methyl-2'-deoxycytidine in DNA + S-adenosyl-L-homocysteine + H(+). Somewhat inhibited by MgCl(2) and spermidine, strongly inhibited by MnCl(2). Its function is as follows. A methylase, recognizes the double-stranded sequence 5'-YTCGAR-3', methylates C-3 on both strands, and protects the DNA from cleavage by the BsuMI endonuclease. The protein is Type II methyltransferase M2.BsuMI (ydiP) of Bacillus subtilis (strain 168).